A 315-amino-acid polypeptide reads, in one-letter code: tRNA pseudouridine synthase B (315 aa).

The active-site Nucleophile is the Asp-54.

This sequence belongs to the pseudouridine synthase TruB family. Type 1 subfamily.

The catalysed reaction is uridine(55) in tRNA = pseudouridine(55) in tRNA. Its function is as follows. Responsible for synthesis of pseudouridine from uracil-55 in the psi GC loop of transfer RNAs. The sequence is that of tRNA pseudouridine synthase B from Cupriavidus pinatubonensis (strain JMP 134 / LMG 1197) (Cupriavidus necator (strain JMP 134)).